Consider the following 170-residue polypeptide: Adenine phosphoribosyltransferase (170 aa).

This sequence belongs to the purine/pyrimidine phosphoribosyltransferase family. In terms of assembly, homodimer.

It is found in the cytoplasm. The enzyme catalyses AMP + diphosphate = 5-phospho-alpha-D-ribose 1-diphosphate + adenine. It participates in purine metabolism; AMP biosynthesis via salvage pathway; AMP from adenine: step 1/1. In terms of biological role, catalyzes a salvage reaction resulting in the formation of AMP, that is energically less costly than de novo synthesis. The polypeptide is Adenine phosphoribosyltransferase (Enterococcus faecalis (strain ATCC 700802 / V583)).